Consider the following 338-residue polypeptide: RNA 3'-terminal phosphate cyclase (338 aa).

ATP contacts are provided by residues Gln-103 and 283–287; that span reads YLADQ. His-308 serves as the catalytic Tele-AMP-histidine intermediate.

It belongs to the RNA 3'-terminal cyclase family. Type 1 subfamily.

It is found in the cytoplasm. The catalysed reaction is a 3'-end 3'-phospho-ribonucleotide-RNA + ATP = a 3'-end 2',3'-cyclophospho-ribonucleotide-RNA + AMP + diphosphate. Functionally, catalyzes the conversion of 3'-phosphate to a 2',3'-cyclic phosphodiester at the end of RNA. The mechanism of action of the enzyme occurs in 3 steps: (A) adenylation of the enzyme by ATP; (B) transfer of adenylate to an RNA-N3'P to produce RNA-N3'PP5'A; (C) and attack of the adjacent 2'-hydroxyl on the 3'-phosphorus in the diester linkage to produce the cyclic end product. The biological role of this enzyme is unknown but it is likely to function in some aspects of cellular RNA processing. The chain is RNA 3'-terminal phosphate cyclase from Escherichia coli O139:H28 (strain E24377A / ETEC).